A 251-amino-acid chain; its full sequence is Imidazole glycerol phosphate synthase subunit HisF (251 aa).

Catalysis depends on residues D11 and D130.

The protein belongs to the HisA/HisF family. As to quaternary structure, heterodimer of HisH and HisF.

Its subcellular location is the cytoplasm. The enzyme catalyses 5-[(5-phospho-1-deoxy-D-ribulos-1-ylimino)methylamino]-1-(5-phospho-beta-D-ribosyl)imidazole-4-carboxamide + L-glutamine = D-erythro-1-(imidazol-4-yl)glycerol 3-phosphate + 5-amino-1-(5-phospho-beta-D-ribosyl)imidazole-4-carboxamide + L-glutamate + H(+). The protein operates within amino-acid biosynthesis; L-histidine biosynthesis; L-histidine from 5-phospho-alpha-D-ribose 1-diphosphate: step 5/9. Its function is as follows. IGPS catalyzes the conversion of PRFAR and glutamine to IGP, AICAR and glutamate. The HisF subunit catalyzes the cyclization activity that produces IGP and AICAR from PRFAR using the ammonia provided by the HisH subunit. The sequence is that of Imidazole glycerol phosphate synthase subunit HisF from Chlorobium phaeovibrioides (strain DSM 265 / 1930) (Prosthecochloris vibrioformis (strain DSM 265)).